The following is a 205-amino-acid chain: Thiamine-phosphate synthase (205 aa).

Residues Gln34–Lys38 and Asn66 contribute to the 4-amino-2-methyl-5-(diphosphooxymethyl)pyrimidine site. Asp67 and Asp86 together coordinate Mg(2+). Ser105 is a 4-amino-2-methyl-5-(diphosphooxymethyl)pyrimidine binding site. Thr131–Thr133 is a binding site for 2-[(2R,5Z)-2-carboxy-4-methylthiazol-5(2H)-ylidene]ethyl phosphate. Position 134 (Lys134) interacts with 4-amino-2-methyl-5-(diphosphooxymethyl)pyrimidine. Gly163 provides a ligand contact to 2-[(2R,5Z)-2-carboxy-4-methylthiazol-5(2H)-ylidene]ethyl phosphate.

Belongs to the thiamine-phosphate synthase family. The cofactor is Mg(2+).

It carries out the reaction 2-[(2R,5Z)-2-carboxy-4-methylthiazol-5(2H)-ylidene]ethyl phosphate + 4-amino-2-methyl-5-(diphosphooxymethyl)pyrimidine + 2 H(+) = thiamine phosphate + CO2 + diphosphate. The enzyme catalyses 2-(2-carboxy-4-methylthiazol-5-yl)ethyl phosphate + 4-amino-2-methyl-5-(diphosphooxymethyl)pyrimidine + 2 H(+) = thiamine phosphate + CO2 + diphosphate. It catalyses the reaction 4-methyl-5-(2-phosphooxyethyl)-thiazole + 4-amino-2-methyl-5-(diphosphooxymethyl)pyrimidine + H(+) = thiamine phosphate + diphosphate. It functions in the pathway cofactor biosynthesis; thiamine diphosphate biosynthesis; thiamine phosphate from 4-amino-2-methyl-5-diphosphomethylpyrimidine and 4-methyl-5-(2-phosphoethyl)-thiazole: step 1/1. In terms of biological role, condenses 4-methyl-5-(beta-hydroxyethyl)thiazole monophosphate (THZ-P) and 2-methyl-4-amino-5-hydroxymethyl pyrimidine pyrophosphate (HMP-PP) to form thiamine monophosphate (TMP). The chain is Thiamine-phosphate synthase from Neisseria gonorrhoeae (strain ATCC 700825 / FA 1090).